The following is a 117-amino-acid chain: Iron-sulfur cluster insertion protein ErpA (117 aa).

Iron-sulfur cluster-binding residues include C45, C109, and C111.

The protein belongs to the HesB/IscA family. Homodimer. Requires iron-sulfur cluster as cofactor.

Functionally, required for insertion of 4Fe-4S clusters for at least IspG. This chain is Iron-sulfur cluster insertion protein ErpA, found in Ruthia magnifica subsp. Calyptogena magnifica.